The sequence spans 173 residues: Lipoprotein signal peptidase (173 aa).

3 helical membrane passes run 9–29 (LPFLLTAIVIVVDQVTKILVV), 37–57 (VIPVIGDLVNLRFVYNTGAAF), and 70–90 (ILLVFLPFLLLIALTGAYLKS). Catalysis depends on residues aspartate 124 and aspartate 146. Residues 142–162 (FNAADSFIVCCGIGLGVNLIL) form a helical membrane-spanning segment.

The protein belongs to the peptidase A8 family.

The protein resides in the cell inner membrane. The catalysed reaction is Release of signal peptides from bacterial membrane prolipoproteins. Hydrolyzes -Xaa-Yaa-Zaa-|-(S,diacylglyceryl)Cys-, in which Xaa is hydrophobic (preferably Leu), and Yaa (Ala or Ser) and Zaa (Gly or Ala) have small, neutral side chains.. It participates in protein modification; lipoprotein biosynthesis (signal peptide cleavage). This protein specifically catalyzes the removal of signal peptides from prolipoproteins. The chain is Lipoprotein signal peptidase from Treponema denticola (strain ATCC 35405 / DSM 14222 / CIP 103919 / JCM 8153 / KCTC 15104).